The primary structure comprises 448 residues: MGKYFGTDGVRGVANQELTPELAFKIGRFGGYVLTKDTDRPKVIIGRDTRISGHMLEGALVAGLLSTGAEVMRLGVISTPGVAYLTKALDAQAGVMISASHNPVQDNGIKFFGSDGFKLTDEQEAEIEALLDKEVDELPRPTGTNLGQVSDYFEGGQKYLQYIKQTVEEDFSGLHIALDCAHGATSSLAPYLFADLEADISTMGTSPNGMNINDGVGSTHPEVLAELVKEKGADIGLAFDGDGDRLIAVDEKGNIVDGDQIMFICAKYMKETGQLKHNTVVSTVMSNLGFYKALEANGITSDKTAVGDRYVMEEMKRGGYNLGGEQSGHIILLDYITTGDGMLSALQLVNIMKMTKKPLSELAGEMTKFPQLLVNVRVTDKKLALENEKIKEIIRVVEEEMNGDGRILVRPSGTEPLIRVMAEAPTQEVCDAYVHRIVEVVKAEVGAE.

The active-site Phosphoserine intermediate is Ser100. 4 residues coordinate Mg(2+): Ser100, Asp240, Asp242, and Asp244. Ser100 carries the post-translational modification Phosphoserine.

Belongs to the phosphohexose mutase family. The cofactor is Mg(2+). Activated by phosphorylation.

The enzyme catalyses alpha-D-glucosamine 1-phosphate = D-glucosamine 6-phosphate. Functionally, catalyzes the conversion of glucosamine-6-phosphate to glucosamine-1-phosphate. This is Phosphoglucosamine mutase from Bacillus cereus (strain ATCC 10987 / NRS 248).